A 261-amino-acid chain; its full sequence is Serine acetyltransferase (261 aa).

Belongs to the transferase hexapeptide repeat family.

Its subcellular location is the cytoplasm. The catalysed reaction is L-serine + acetyl-CoA = O-acetyl-L-serine + CoA. The protein operates within amino-acid biosynthesis; L-cysteine biosynthesis; L-cysteine from L-serine: step 1/2. The polypeptide is Serine acetyltransferase (cysE) (Buchnera aphidicola subsp. Schizaphis graminum (strain Sg)).